The sequence spans 300 residues: tRNA dimethylallyltransferase 1 (300 aa).

Position 13–20 (13–20) interacts with ATP; the sequence is GPTGVGKT. 15–20 serves as a coordination point for substrate; the sequence is TGVGKT. The interaction with substrate tRNA stretch occupies residues 38–41; it reads DSRQ.

The protein belongs to the IPP transferase family. Monomer. Mg(2+) is required as a cofactor.

It carries out the reaction adenosine(37) in tRNA + dimethylallyl diphosphate = N(6)-dimethylallyladenosine(37) in tRNA + diphosphate. Catalyzes the transfer of a dimethylallyl group onto the adenine at position 37 in tRNAs that read codons beginning with uridine, leading to the formation of N6-(dimethylallyl)adenosine (i(6)A). The sequence is that of tRNA dimethylallyltransferase 1 from Porphyromonas gingivalis (strain ATCC BAA-308 / W83).